Consider the following 317-residue polypeptide: Melanocyte-stimulating hormone receptor (317 aa).

Over 1 to 37 the chain is Extracellular; that stretch reads MPVQGSQRRLLGSLNSTPTATPRLGLAANQTGARCLE. Asn29 is a glycosylation site (N-linked (GlcNAc...) asparagine). Residues 38 to 63 form a helical membrane-spanning segment; the sequence is VSIPDGLFLSLGLVSLVENVLVVVAI. Topologically, residues 64–72 are cytoplasmic; it reads ARNRNLHSP. The helical transmembrane segment at 73 to 93 threads the bilayer; it reads MYCFICCLALSDLLVSGSNML. Residues 94–118 are Extracellular-facing; sequence ETAVILLLEAGALAARAAVVQQLDN. A helical membrane pass occupies residues 119–140; sequence VIDVITCSSMLSSLCFLGAIAV. The Cytoplasmic portion of the chain corresponds to 141 to 163; the sequence is DRYISIFYALRYHSIVTLRRARR. Residues 164 to 183 form a helical membrane-spanning segment; the sequence is VVAAIWVASVLFSTLFIAYC. Over 184–191 the chain is Extracellular; that stretch reads DHAAVLLS. Residues 192-211 traverse the membrane as a helical segment; the sequence is LVVFFLAMLVLMAVLYVHML. At 212 to 240 the chain is on the cytoplasmic side; it reads ARACQHAQGIAQLHKRQRPAHQGVGLKGA. Residues 241-266 traverse the membrane as a helical segment; that stretch reads ATLTILLGIFFLCWGPFFLHLTLIVL. The Extracellular portion of the chain corresponds to 267-279; it reads CPQHPTCSCIFKN. A helical transmembrane segment spans residues 280-300; that stretch reads FNLFLTLIICNAIIDPLIYAF. The Cytoplasmic portion of the chain corresponds to 301–317; that stretch reads RSQELRRTLKKVLLCSW. Residue Cys315 is the site of S-palmitoyl cysteine attachment.

It belongs to the G-protein coupled receptor 1 family. Interacts with MGRN1, but does not undergo MGRN1-mediated ubiquitination; this interaction competes with GNAS-binding and thus inhibits agonist-induced cAMP production. Interacts with OPN3; the interaction results in a decrease in MC1R-mediated cAMP signaling and ultimately a decrease in melanin production in melanocytes.

The protein localises to the cell membrane. Its function is as follows. Receptor for MSH (alpha, beta and gamma) and ACTH. The activity of this receptor is mediated by G proteins which activate adenylate cyclase. Mediates melanogenesis, the production of eumelanin (black/brown) and phaeomelanin (red/yellow), via regulation of cAMP signaling in melanocytes. This is Melanocyte-stimulating hormone receptor (MC1R) from Trachypithecus auratus (Javan langur).